Reading from the N-terminus, the 145-residue chain is uncharacterized protein (145 aa).

The helical transmembrane segment at 16 to 36 (VLAYLLQLSASLVLPVAIWLI) threads the bilayer.

Its subcellular location is the mitochondrion membrane. This is an uncharacterized protein from Arabidopsis thaliana (Mouse-ear cress).